Reading from the N-terminus, the 489-residue chain is Cytochrome P450-DIT2 (489 aa).

Cys-435 contacts heme.

Belongs to the cytochrome P450 family. Requires heme as cofactor.

Its function is as follows. Involved in spore wall maturation. Thought to catalyze the oxidation of tyrosine residues in the formation of LL-dityrosine a precursor of the spore wall. This chain is Cytochrome P450-DIT2 (DIT2), found in Saccharomyces cerevisiae (strain ATCC 204508 / S288c) (Baker's yeast).